Consider the following 1049-residue polypeptide: Presequence protease, mitochondrial (1049 aa).

The transit peptide at 1–39 (MLRSYLHLGRHRTPAFRQPLGRLLRPTASILQYAQSRTL) directs the protein to the mitochondrion. Residue His113 coordinates Zn(2+). The active-site Proton acceptor is Glu116. His117 is a Zn(2+) binding site. Residue Glu189 is part of the active site. Glu222 contributes to the Zn(2+) binding site.

This sequence belongs to the peptidase M16 family. PreP subfamily. In terms of assembly, monomer and homodimer; homodimerization is induced by binding of the substrate. It depends on Zn(2+) as a cofactor.

The protein localises to the mitochondrion intermembrane space. The protein resides in the mitochondrion matrix. Functionally, degrades mitochondrial transit peptides after their cleavage in the intermembrane space or in the matrix, and presequence peptides; clearance of these peptides is required to keep the presequence processing machinery running. Preferentially cleaves the N-terminal side of paired basic amino acid residues. Also degrades other unstructured peptides. May function as an ATP-dependent peptidase as opposed to a metalloendopeptidase. The protein is Presequence protease, mitochondrial (cym1) of Emericella nidulans (strain FGSC A4 / ATCC 38163 / CBS 112.46 / NRRL 194 / M139) (Aspergillus nidulans).